The following is a 213-amino-acid chain: ATP-dependent Clp protease proteolytic subunit (213 aa).

The Nucleophile role is filled by Ser-114. His-139 is an active-site residue.

Belongs to the peptidase S14 family. As to quaternary structure, fourteen ClpP subunits assemble into 2 heptameric rings which stack back to back to give a disk-like structure with a central cavity, resembling the structure of eukaryotic proteasomes.

The protein resides in the cytoplasm. The catalysed reaction is Hydrolysis of proteins to small peptides in the presence of ATP and magnesium. alpha-casein is the usual test substrate. In the absence of ATP, only oligopeptides shorter than five residues are hydrolyzed (such as succinyl-Leu-Tyr-|-NHMec, and Leu-Tyr-Leu-|-Tyr-Trp, in which cleavage of the -Tyr-|-Leu- and -Tyr-|-Trp bonds also occurs).. In terms of biological role, cleaves peptides in various proteins in a process that requires ATP hydrolysis. Has a chymotrypsin-like activity. Plays a major role in the degradation of misfolded proteins. This chain is ATP-dependent Clp protease proteolytic subunit, found in Pseudomonas putida (strain GB-1).